The chain runs to 206 residues: MGAEWELGAEAGGSLLLCAALLAAGCALGLRLGRGQGAADRGALIWLCYDALVHFALEGPFVYLSLVGNVANSDGLIASLWKEYGKADARWVYFDPTIVSVEILTVALDGSLALFLIYAIVKEKYYRHFLQITLCVCELYGCWMTFLPEWLTRSPNLNTSNWLYCWLYLFFFNGVWVLIPGLLLWQSWLELKKMHQKETSSVKKFQ.

A run of 4 helical transmembrane segments spans residues 10–30, 42–62, 101–121, and 165–185; these read EAGGSLLLCAALLAAGCALGL, GALIWLCYDALVHFALEGPFV, VEILTVALDGSLALFLIYAIV, and CWLYLFFFNGVWVLIPGLLLW. An EXPERA domain is found at 39–184; sequence ADRGALIWLC…VWVLIPGLLL (146 aa).

The protein belongs to the EBP family. Homodimer. Widely expressed with highest levels in liver, lung and kidney.

It localises to the endoplasmic reticulum membrane. Does not possess sterol isomerase activity and does not bind sigma ligands. In Homo sapiens (Human), this protein is Emopamil-binding protein-like (EBPL).